A 288-amino-acid polypeptide reads, in one-letter code: Fatty acid-binding protein TM_1468 (288 aa).

In terms of domain architecture, DegV spans 3-283 (VKILVDSTAD…PGTVGFGIEV (281 aa)). Hexadecanoate-binding residues include Thr-63 and Ser-96.

As to quaternary structure, monomer.

In terms of biological role, binds long-chain fatty acids, such as palmitate, and may play a role in lipid transport or fatty acid metabolism. The polypeptide is Fatty acid-binding protein TM_1468 (Thermotoga maritima (strain ATCC 43589 / DSM 3109 / JCM 10099 / NBRC 100826 / MSB8)).